The chain runs to 524 residues: Putative ATP-dependent RNA helicase R458 (524 aa).

Residues 125-338 (VPELIQRKDT…NSYFRKYSPI (214 aa)) form the Helicase ATP-binding domain. 138 to 145 (FKSGTGKT) lines the ATP pocket. Residues 268 to 271 (DEFD) carry the DEFD box motif. The 152-residue stretch at 373–524 (IILDLLKQCR…QLPGDLSTLL (152 aa)) folds into the Helicase C-terminal domain.

It belongs to the DEAD box helicase family. eIF4A subfamily.

The enzyme catalyses ATP + H2O = ADP + phosphate + H(+). In terms of biological role, putative ATP-dependent RNA helicase. This Acanthamoeba polyphaga mimivirus (APMV) protein is Putative ATP-dependent RNA helicase R458.